A 362-amino-acid polypeptide reads, in one-letter code: Serine/threonine-protein kinase SBK2 (362 aa).

The span at 1–11 (MPGKQSEDRPM) shows a compositional bias: basic and acidic residues. The segment at 1 to 20 (MPGKQSEDRPMEVAAVEDGG) is disordered. One can recognise a Protein kinase domain in the interval 62-330 (YEEVRPLGQG…IKSYLGQPWK (269 aa)). Residues 68-76 (LGQGRFGRV) and lysine 91 contribute to the ATP site. The active-site Proton acceptor is the aspartate 183. The disordered stretch occupies residues 317–362 (PVSSIKSYLGQPWKQREEGAEELTKELREDGSRGGQEAAKGEQPAC). A compositionally biased stretch (basic and acidic residues) spans 330 to 348 (KQREEGAEELTKELREDGS).

Belongs to the protein kinase superfamily. Ser/Thr protein kinase family. STKL subfamily.

It carries out the reaction L-seryl-[protein] + ATP = O-phospho-L-seryl-[protein] + ADP + H(+). The enzyme catalyses L-threonyl-[protein] + ATP = O-phospho-L-threonyl-[protein] + ADP + H(+). This is Serine/threonine-protein kinase SBK2 (Sbk2) from Rattus norvegicus (Rat).